Consider the following 274-residue polypeptide: NADPH-dependent 7-cyano-7-deazaguanine reductase (274 aa).

80–82 (VES) is a substrate binding site. 82–83 (SK) serves as a coordination point for NADPH. Cys181 functions as the Thioimide intermediate in the catalytic mechanism. The active-site Proton donor is the Asp188. Residue 220–221 (HE) coordinates substrate. 249–250 (RG) serves as a coordination point for NADPH.

It belongs to the GTP cyclohydrolase I family. QueF type 2 subfamily. In terms of assembly, homodimer.

The protein resides in the cytoplasm. It catalyses the reaction 7-aminomethyl-7-carbaguanine + 2 NADP(+) = 7-cyano-7-deazaguanine + 2 NADPH + 3 H(+). The protein operates within tRNA modification; tRNA-queuosine biosynthesis. In terms of biological role, catalyzes the NADPH-dependent reduction of 7-cyano-7-deazaguanine (preQ0) to 7-aminomethyl-7-deazaguanine (preQ1). The chain is NADPH-dependent 7-cyano-7-deazaguanine reductase from Burkholderia vietnamiensis (strain G4 / LMG 22486) (Burkholderia cepacia (strain R1808)).